Reading from the N-terminus, the 626-residue chain is Chaperone protein HtpG (626 aa).

An a; substrate-binding region spans residues 1–339; sequence MSQNQETRGF…SNDLPLNVSR (339 aa). The segment at 340–555 is b; it reads EILQDNKITA…NDQMTTQMAK (216 aa). The tract at residues 556–626 is c; it reads LFAAAGQPVP…FIKRINKLLG (71 aa).

The protein belongs to the heat shock protein 90 family. In terms of assembly, homodimer.

It is found in the cytoplasm. Functionally, molecular chaperone. Has ATPase activity. This Haemophilus influenzae (strain 86-028NP) protein is Chaperone protein HtpG.